We begin with the raw amino-acid sequence, 448 residues long: Chromosomal replication initiator protein DnaA (448 aa).

The interval 1–73 is domain I, interacts with DnaA modulators; the sequence is MSTHLTETWE…VNALKLLTSK (73 aa). Residues 73 to 109 are domain II; that stretch reads KKYNIDFIVTTEEKIEENEKNHNNEKSNIVVNDEMST. Residues 110–326 form a domain III, AAA+ region region; it reads MLNPKYTFDS…GALIRIVAFS (217 aa). ATP contacts are provided by Gly154, Gly156, Lys157, and Thr158. Positions 327–448 are domain IV, binds dsDNA; that stretch reads SLTNKEISVD…NELNKRINQK (122 aa).

This sequence belongs to the DnaA family. As to quaternary structure, oligomerizes as a right-handed, spiral filament on DNA at oriC.

Its subcellular location is the cytoplasm. In terms of biological role, plays an essential role in the initiation and regulation of chromosomal replication. ATP-DnaA binds to the origin of replication (oriC) to initiate formation of the DNA replication initiation complex once per cell cycle. Binds the DnaA box (a 9 base pair repeat at the origin) and separates the double-stranded (ds)DNA. Forms a right-handed helical filament on oriC DNA; dsDNA binds to the exterior of the filament while single-stranded (ss)DNA is stabiized in the filament's interior. The ATP-DnaA-oriC complex binds and stabilizes one strand of the AT-rich DNA unwinding element (DUE), permitting loading of DNA polymerase. After initiation quickly degrades to an ADP-DnaA complex that is not apt for DNA replication. Binds acidic phospholipids. The protein is Chromosomal replication initiator protein DnaA of Clostridium botulinum (strain 657 / Type Ba4).